A 177-amino-acid chain; its full sequence is Large ribosomal subunit protein uL6 (177 aa).

This sequence belongs to the universal ribosomal protein uL6 family. Part of the 50S ribosomal subunit.

Its function is as follows. This protein binds to the 23S rRNA, and is important in its secondary structure. It is located near the subunit interface in the base of the L7/L12 stalk, and near the tRNA binding site of the peptidyltransferase center. This is Large ribosomal subunit protein uL6 from Glaesserella parasuis serovar 5 (strain SH0165) (Haemophilus parasuis).